A 330-amino-acid polypeptide reads, in one-letter code: Free fatty acid receptor 2 (330 aa).

At 1-8 (MTPDWHSS) the chain is on the extracellular side. Residues 9 to 29 (LILTAYILIFLTGLPANLLAL) traverse the membrane as a helical segment. Residues 30–43 (RAFVSRVRQPQPAP) are Cytoplasmic-facing. Residues 44-64 (VHILLLNLTLADLLLLLLLPF) traverse the membrane as a helical segment. Residues 65-79 (RIVEAASNFRWYLPK) are Extracellular-facing. Residues 80 to 100 (IVCALTGFGFYSSIYCSTWLL) form a helical membrane-spanning segment. The Cytoplasmic segment spans residues 101–126 (AGISIERYLGVAFPVQYKLSRRPLYG). A helical membrane pass occupies residues 127 to 147 (VIAALVAWIMSFGHCTIVIIV). Residues 148–184 (QYLNSTEQVGTENQITCYENFTQAQLDVVLPVRLELC) lie on the Extracellular side of the membrane. N-linked (GlcNAc...) asparagine glycans are attached at residues asparagine 151 and asparagine 167. The helical transmembrane segment at 185-205 (LVLFFVPMTVTIFCYWRFVWI) threads the bilayer. Residues 206–219 (MLTQPHVGAQRRRR) are Cytoplasmic-facing. A helical transmembrane segment spans residues 220–240 (AVGLAVVTLLNFLVCFGPYNM). At 241 to 255 (SHLVGFHLRQSPSWR) the chain is on the extracellular side. A helical membrane pass occupies residues 256-276 (VEAVVFSSLNASLDPLLFYFS). Topologically, residues 277-330 (SSVVRRAFGKGLLLLRNPGSSMLGRGAEETVEGTKTDRGGSQTEGAQSSDFVTE) are cytoplasmic. The segment at 300–330 (GRGAEETVEGTKTDRGGSQTEGAQSSDFVTE) is disordered. The segment covering 302 to 314 (GAEETVEGTKTDR) has biased composition (basic and acidic residues). Over residues 315 to 330 (GGSQTEGAQSSDFVTE) the composition is skewed to polar residues.

Belongs to the G-protein coupled receptor 1 family. In terms of assembly, interacts with FCN1 (via Fibrinogen C-terminal domain). As to expression, detected in whole wall and separated mucosa in the distal ileum and colon. Expressed by enteroendocrine cells expressing peptide YY (PYY) (at protein level).

The protein localises to the cell membrane. In terms of biological role, g protein-coupled receptor that is activated by a major product of dietary fiber digestion, the short chain fatty acids (SCFAs), and that plays a role in the regulation of whole-body energy homeostasis and in intestinal immunity. In omnivorous mammals, the short chain fatty acids acetate, propionate and butyrate are produced primarily by the gut microbiome that metabolizes dietary fibers. SCFAs serve as a source of energy but also act as signaling molecules. That G protein-coupled receptor is probably coupled to the pertussis toxin-sensitive, G(i/o)-alpha family of G proteins but also to the Gq family. Its activation results in the formation of inositol 1,4,5-trisphosphate, the mobilization of intracellular calcium, the phosphorylation of the MAPK3/ERK1 and MAPK1/ERK2 kinases and the inhibition of intracellular cAMP accumulation. May play a role in glucose homeostasis by regulating the secretion of GLP-1, in response to short-chain fatty acids accumulating in the intestine. May also regulate the production of LEP/Leptin, a hormone acting on the central nervous system to inhibit food intake. Finally, may also regulate whole-body energy homeostasis through adipogenesis regulating both differentiation and lipid storage of adipocytes. In parallel to its role in energy homeostasis, may also mediate the activation of the inflammatory and immune responses by SCFA in the intestine, regulating the rapid production of chemokines and cytokines. May also play a role in the resolution of the inflammatory response and control chemotaxis in neutrophils. In addition to SCFAs, may also be activated by the extracellular lectin FCN1 in a process leading to activation of monocytes and inducing the secretion of interleukin-8/IL-8 in response to the presence of microbes. In Rattus norvegicus (Rat), this protein is Free fatty acid receptor 2 (Ffar2).